We begin with the raw amino-acid sequence, 212 residues long: Urease accessory protein UreG (212 aa).

19–26 (GPVGSGKT) contacts GTP.

The protein belongs to the SIMIBI class G3E GTPase family. UreG subfamily. As to quaternary structure, homodimer. UreD, UreF and UreG form a complex that acts as a GTP-hydrolysis-dependent molecular chaperone, activating the urease apoprotein by helping to assemble the nickel containing metallocenter of UreC. The UreE protein probably delivers the nickel.

It localises to the cytoplasm. Its function is as follows. Facilitates the functional incorporation of the urease nickel metallocenter. This process requires GTP hydrolysis, probably effectuated by UreG. In Vibrio parahaemolyticus, this protein is Urease accessory protein UreG.